Consider the following 156-residue polypeptide: Small ribosomal subunit protein uS7 (156 aa).

Belongs to the universal ribosomal protein uS7 family. In terms of assembly, part of the 30S ribosomal subunit. Contacts proteins S9 and S11.

Its function is as follows. One of the primary rRNA binding proteins, it binds directly to 16S rRNA where it nucleates assembly of the head domain of the 30S subunit. Is located at the subunit interface close to the decoding center, probably blocks exit of the E-site tRNA. In Parvibaculum lavamentivorans (strain DS-1 / DSM 13023 / NCIMB 13966), this protein is Small ribosomal subunit protein uS7.